A 307-amino-acid polypeptide reads, in one-letter code: MASQQHSVPCISRSPPEQPLQVKVVGLFKSSSFQIAKSAAESLKSNYPSNFEDPIIIPVQEFAWHQYLQEKKRELKNEVWEYSSYVMCFINDKLLGDALDLQKWAHKVWDIVDFKPPALYEALTVDYSAKFLRDTKHNFVFLDISIDLYPIGRLIFELYSDTCPKTCKNFQILCTGKAGFSQSGIKLHYTGSIFHRVVRNGWVQGGDIVAGKGDNGESIYGPTFEDENFSVPHNKRGVLGMVNKGRHSNGSQFYITLQAAPYLDKKYVAFGQLIEGTDVLHHLESVPTENERPIQNCVITASGQLYA.

The 164-residue stretch at 141 to 304 (FLDISIDLYP…QNCVITASGQ (164 aa)) folds into the PPIase cyclophilin-type domain.

The protein belongs to the cyclophilin-type PPIase family.

In terms of biological role, probable inactive PPIase with no peptidyl-prolyl cis-trans isomerase activity. The polypeptide is Probable inactive peptidyl-prolyl cis-trans isomerase-like 6 (Bos taurus (Bovine)).